Consider the following 330-residue polypeptide: MKVLYDDDVNTNVLENKTIAVIGYGSQGRGQSLNMHDSGLNVIVGLREGGKSWKKAQEDGLTVKTIEDASKEADIIHILIPDEIQKTVYENQIQQYVEPGNTISFSHGYNIHFNRIRVPEDVNVTMIAPKAPGSKVRQTYQEGFGTPGLIAIEQDATGDAYDIAIEMAKAVGLTRAGVIETTYREETETDLFGEQAVLCGGLTGLIQAGFETLVEAGYKPEMAYFETCHEMKLIVDLIYEKGFGNMWHDVSNTAEFGGLTRRDRVITEESKENMKKILREIQDGTFATEFAVDADTSYPKLLTQRRLEGEKQIEKVGKNLRIACGLQKEE.

Residues 1 to 181 enclose the KARI N-terminal Rossmann domain; it reads MKVLYDDDVN…GLTRAGVIET (181 aa). NADP(+) is bound by residues 24–27, Arg47, Ser52, and 82–85; these read YGSQ and DEIQ. The active site involves His107. Gly133 is a binding site for NADP(+). Residues 182–327 enclose the KARI C-terminal knotted domain; it reads TYREETETDL…KNLRIACGLQ (146 aa). Asp190, Glu194, Glu226, and Glu230 together coordinate Mg(2+). Ser251 contributes to the substrate binding site.

This sequence belongs to the ketol-acid reductoisomerase family. The cofactor is Mg(2+).

The catalysed reaction is (2R)-2,3-dihydroxy-3-methylbutanoate + NADP(+) = (2S)-2-acetolactate + NADPH + H(+). The enzyme catalyses (2R,3R)-2,3-dihydroxy-3-methylpentanoate + NADP(+) = (S)-2-ethyl-2-hydroxy-3-oxobutanoate + NADPH + H(+). It participates in amino-acid biosynthesis; L-isoleucine biosynthesis; L-isoleucine from 2-oxobutanoate: step 2/4. It functions in the pathway amino-acid biosynthesis; L-valine biosynthesis; L-valine from pyruvate: step 2/4. Involved in the biosynthesis of branched-chain amino acids (BCAA). Catalyzes an alkyl-migration followed by a ketol-acid reduction of (S)-2-acetolactate (S2AL) to yield (R)-2,3-dihydroxy-isovalerate. In the isomerase reaction, S2AL is rearranged via a Mg-dependent methyl migration to produce 3-hydroxy-3-methyl-2-ketobutyrate (HMKB). In the reductase reaction, this 2-ketoacid undergoes a metal-dependent reduction by NADPH to yield (R)-2,3-dihydroxy-isovalerate. The protein is Ketol-acid reductoisomerase (NADP(+)) of Methanosphaera stadtmanae (strain ATCC 43021 / DSM 3091 / JCM 11832 / MCB-3).